The following is an 85-amino-acid chain: Antibacterial factor-related peptide 2 (85 aa).

The first 17 residues, 1–17, serve as a signal peptide directing secretion; sequence MFVRSLFLALLLATIVA. Positions 82-85 are excised as a propeptide; the sequence is IKRG.

In terms of tissue distribution, expressed in the pharynx (at protein level). Detected in pharyngeal neurons and secretory cells.

It localises to the secreted. In terms of biological role, exhibits antimicrobial activity against the Gram-positive bacteria B.subtilis IFO 3134, K.varians MAFF 118076 and S.aureus ATCC 6538P, the Gram-negative bacteria A.tumefaciens MAFF 1001, B.bacteriovorus MAFF 106101 and K.pneumoniae MAFF 519002, and the yeasts C.krusei MAFF 114085, K.thermotolerans MAFF 113848 and T.delbrueckii MAFF 113811. The chain is Antibacterial factor-related peptide 2 from Caenorhabditis elegans.